Here is a 640-residue protein sequence, read N- to C-terminus: Serine/threonine-protein phosphatase with EF-hands 1 (640 aa).

Residues 16 to 45 (VVRAALIIQNWYRRYRARLSARQHYALAIF) form the IQ domain. Residues 122-445 (INLLLQAFKQ…PQFFQYQVTS (324 aa)) are catalytic. D173, H175, D202, and N234 together coordinate Mn(2+). The Proton donor role is filled by H235. Mn(2+)-binding residues include H286 and H393. 3 EF-hand domains span residues 473 to 508 (ARKT…ILGL), 556 to 591 (RYRS…FNAH), and 596 to 631 (IDDS…VHKY). Positions 569, 571, 573, 580, 609, 611, 613, 615, and 620 each coordinate Ca(2+).

The protein belongs to the PPP phosphatase family. Mn(2+) serves as cofactor. It depends on Mg(2+) as a cofactor.

It catalyses the reaction O-phospho-L-seryl-[protein] + H2O = L-seryl-[protein] + phosphate. The catalysed reaction is O-phospho-L-threonyl-[protein] + H2O = L-threonyl-[protein] + phosphate. With respect to regulation, activated by calcium. Its function is as follows. May have a role in the recovery or adaptation response of photoreceptors. May have a role in development. This Rattus norvegicus (Rat) protein is Serine/threonine-protein phosphatase with EF-hands 1 (Ppef1).